Here is a 249-residue protein sequence, read N- to C-terminus: 1-(5-phosphoribosyl)-5-[(5-phosphoribosylamino)methylideneamino] imidazole-4-carboxamide isomerase (249 aa).

D8 serves as the catalytic Proton acceptor. Catalysis depends on D129, which acts as the Proton donor.

It belongs to the HisA/HisF family.

It is found in the cytoplasm. It carries out the reaction 1-(5-phospho-beta-D-ribosyl)-5-[(5-phospho-beta-D-ribosylamino)methylideneamino]imidazole-4-carboxamide = 5-[(5-phospho-1-deoxy-D-ribulos-1-ylimino)methylamino]-1-(5-phospho-beta-D-ribosyl)imidazole-4-carboxamide. It functions in the pathway amino-acid biosynthesis; L-histidine biosynthesis; L-histidine from 5-phospho-alpha-D-ribose 1-diphosphate: step 4/9. This Rhizobium rhizogenes (strain K84 / ATCC BAA-868) (Agrobacterium radiobacter) protein is 1-(5-phosphoribosyl)-5-[(5-phosphoribosylamino)methylideneamino] imidazole-4-carboxamide isomerase.